Reading from the N-terminus, the 282-residue chain is Protoheme IX farnesyltransferase (282 aa).

The next 8 helical transmembrane spans lie at 40-60, 87-107, 108-128, 135-157, 162-184, 204-224, 228-248, and 261-281; these read LVLA…FNMV, AVLA…AVNP, YVFV…TVLL, SVVF…ATGG, GVLL…STYY, AGVV…FLAF, LISA…VAVL, and AYRA…LLVL.

Belongs to the UbiA prenyltransferase family. Protoheme IX farnesyltransferase subfamily.

The protein resides in the cell membrane. It catalyses the reaction heme b + (2E,6E)-farnesyl diphosphate + H2O = Fe(II)-heme o + diphosphate. Its pathway is porphyrin-containing compound metabolism; heme O biosynthesis; heme O from protoheme: step 1/1. Functionally, converts heme B (protoheme IX) to heme O by substitution of the vinyl group on carbon 2 of heme B porphyrin ring with a hydroxyethyl farnesyl side group. The protein is Protoheme IX farnesyltransferase of Thermofilum pendens (strain DSM 2475 / Hrk 5).